Here is a 237-residue protein sequence, read N- to C-terminus: Matrix protein (237 aa).

Over residues 1 to 10 (MSSLKKILGL) the composition is skewed to low complexity. The tract at residues 1 to 23 (MSSLKKILGLKGKGKKSKKLGIA) is disordered. The short motif at 2–4 (SSL) is the dynamin binding element. The PPXY motif signature appears at 24-27 (PPPY). The PTAP/PSAP motif signature appears at 37–40 (PSAP).

This sequence belongs to the vesiculoviruses matrix protein family. As to quaternary structure, homomultimer. Interacts with viral nucleocapsid; this interaction contributes to the virion assembly. Interacts with the viral envelope glycoprotein; this interaction contributes to the virion assembly. Interacts with host RAE1-NUP98 complex. Interacts with host NEDD4 and TSG101. Interacts with host dynamin. Interacts with host NDUFAF4; the interaction inhibits viral propagation and is independent of interferon activation. Interacts with host GTF2H5; the interaction may inhibit host transcription. In terms of processing, phosphorylated by host.

The protein localises to the virion. The protein resides in the host endomembrane system. Its subcellular location is the host nucleus membrane. It is found in the host nucleus. It localises to the host cytoplasm. In terms of biological role, forms a double layer around the helical nucleocapsid, the inner matrix layer binding to the N helix and the outer matrix layer binding to the envelope glycoprotein. Plays a major role in assembly and budding of virion, by recruiting cellular partners of the ESCRT complexes that play a key role in releasing the budding particle from the host membrane. Condensates the ribonucleocapsid core during virus assembly. Inhibits the host mRNA nuclear export thereby inducing the shut off of cellular transcription and preventing the interferon signaling and the establishment of antiviral state in infected cells. This shutoff presumably inhibits interferon signaling and thus establishment of antiviral state in virus infected cells. Induces cell-rounding, cytoskeleton disorganization and apoptosis in infected cell. Inhibits host transcription, possibly through interaction with host DNA repair factor IIH/TFIIH GTF2H5 subunit. This Aedes (Bovine) protein is Matrix protein (M).